Consider the following 225-residue polypeptide: Ribosome maturation factor RimM (225 aa).

The region spanning 144–225 (ADEFYWVDLI…RIVVDWEADY (82 aa)) is the PRC barrel domain.

The protein belongs to the RimM family. In terms of assembly, binds ribosomal protein uS19.

The protein localises to the cytoplasm. Functionally, an accessory protein needed during the final step in the assembly of 30S ribosomal subunit, possibly for assembly of the head region. Essential for efficient processing of 16S rRNA. May be needed both before and after RbfA during the maturation of 16S rRNA. It has affinity for free ribosomal 30S subunits but not for 70S ribosomes. In Burkholderia lata (strain ATCC 17760 / DSM 23089 / LMG 22485 / NCIMB 9086 / R18194 / 383), this protein is Ribosome maturation factor RimM.